The chain runs to 402 residues: 4-hydroxy-3-methylbut-2-enyl diphosphate reductase (402 aa).

Cys66 is a binding site for [4Fe-4S] cluster. Residue His96 participates in (2E)-4-hydroxy-3-methylbut-2-enyl diphosphate binding. His96 contacts dimethylallyl diphosphate. His96 contributes to the isopentenyl diphosphate binding site. Cys157 provides a ligand contact to [4Fe-4S] cluster. His185 is a (2E)-4-hydroxy-3-methylbut-2-enyl diphosphate binding site. His185 lines the dimethylallyl diphosphate pocket. His185 contacts isopentenyl diphosphate. Glu187 serves as the catalytic Proton donor. Thr250 provides a ligand contact to (2E)-4-hydroxy-3-methylbut-2-enyl diphosphate. Residue Cys288 coordinates [4Fe-4S] cluster. Ser317, Ser318, Asn319, and Ser379 together coordinate (2E)-4-hydroxy-3-methylbut-2-enyl diphosphate. Dimethylallyl diphosphate contacts are provided by Ser317, Ser318, Asn319, and Ser379. Isopentenyl diphosphate contacts are provided by Ser317, Ser318, Asn319, and Ser379.

The protein belongs to the IspH family. [4Fe-4S] cluster is required as a cofactor.

It carries out the reaction isopentenyl diphosphate + 2 oxidized [2Fe-2S]-[ferredoxin] + H2O = (2E)-4-hydroxy-3-methylbut-2-enyl diphosphate + 2 reduced [2Fe-2S]-[ferredoxin] + 2 H(+). It catalyses the reaction dimethylallyl diphosphate + 2 oxidized [2Fe-2S]-[ferredoxin] + H2O = (2E)-4-hydroxy-3-methylbut-2-enyl diphosphate + 2 reduced [2Fe-2S]-[ferredoxin] + 2 H(+). The protein operates within isoprenoid biosynthesis; dimethylallyl diphosphate biosynthesis; dimethylallyl diphosphate from (2E)-4-hydroxy-3-methylbutenyl diphosphate: step 1/1. It participates in isoprenoid biosynthesis; isopentenyl diphosphate biosynthesis via DXP pathway; isopentenyl diphosphate from 1-deoxy-D-xylulose 5-phosphate: step 6/6. Functionally, catalyzes the conversion of 1-hydroxy-2-methyl-2-(E)-butenyl 4-diphosphate (HMBPP) into a mixture of isopentenyl diphosphate (IPP) and dimethylallyl diphosphate (DMAPP). Acts in the terminal step of the DOXP/MEP pathway for isoprenoid precursor biosynthesis. The polypeptide is 4-hydroxy-3-methylbut-2-enyl diphosphate reductase (Trichormus variabilis (strain ATCC 29413 / PCC 7937) (Anabaena variabilis)).